Reading from the N-terminus, the 141-residue chain is Hemoglobin subunit alpha (141 aa).

The Globin domain occupies 1–141; the sequence is VLSSADKNNV…VSTVLTSKYR (141 aa). Position 3 is a phosphoserine (S3). Residues K7 and K11 each carry the N6-succinyllysine modification. N6-acetyllysine; alternate is present on K16. Residue K16 is modified to N6-succinyllysine; alternate. At Y24 the chain carries Phosphotyrosine. Residue S35 is modified to Phosphoserine. At K40 the chain carries N6-succinyllysine. S49 is modified (phosphoserine). Residue H58 coordinates O2. H87 serves as a coordination point for heme b. S102 is modified (phosphoserine). T108 is subject to Phosphothreonine. The residue at position 124 (S124) is a Phosphoserine. A phosphothreonine mark is found at T134 and T137. S138 carries the phosphoserine modification.

Belongs to the globin family. Heterotetramer of two alpha chains and two beta chains. Red blood cells.

Functionally, involved in oxygen transport from the lung to the various peripheral tissues. Hemopressin acts as an antagonist peptide of the cannabinoid receptor CNR1. Hemopressin-binding efficiently blocks cannabinoid receptor CNR1 and subsequent signaling. The sequence is that of Hemoglobin subunit alpha (HBA) from Panthera pardus saxicolor (Northern Persian leopard).